Here is a 473-residue protein sequence, read N- to C-terminus: tRNA modification GTPase MnmE (473 aa).

The (6S)-5-formyl-5,6,7,8-tetrahydrofolate site is built by Arg31, Glu95, and Arg134. One can recognise a TrmE-type G domain in the interval Gly230–Lys394. GTP is bound by residues Asn240–Thr245, Ser259–Thr265, and Asp284–Gly287. The Mg(2+) site is built by Ser244 and Thr265. Residue Lys473 coordinates (6S)-5-formyl-5,6,7,8-tetrahydrofolate.

It belongs to the TRAFAC class TrmE-Era-EngA-EngB-Septin-like GTPase superfamily. TrmE GTPase family. As to quaternary structure, homodimer. Heterotetramer of two MnmE and two MnmG subunits. K(+) serves as cofactor.

It is found in the cytoplasm. In terms of biological role, exhibits a very high intrinsic GTPase hydrolysis rate. Involved in the addition of a carboxymethylaminomethyl (cmnm) group at the wobble position (U34) of certain tRNAs, forming tRNA-cmnm(5)s(2)U34. The sequence is that of tRNA modification GTPase MnmE from Chlorobaculum tepidum (strain ATCC 49652 / DSM 12025 / NBRC 103806 / TLS) (Chlorobium tepidum).